Consider the following 268-residue polypeptide: Ribosomal RNA small subunit methyltransferase A (268 aa).

S-adenosyl-L-methionine-binding residues include asparagine 18, leucine 20, glycine 45, glutamate 66, aspartate 91, and asparagine 112.

Belongs to the class I-like SAM-binding methyltransferase superfamily. rRNA adenine N(6)-methyltransferase family. RsmA subfamily.

The protein localises to the cytoplasm. It carries out the reaction adenosine(1518)/adenosine(1519) in 16S rRNA + 4 S-adenosyl-L-methionine = N(6)-dimethyladenosine(1518)/N(6)-dimethyladenosine(1519) in 16S rRNA + 4 S-adenosyl-L-homocysteine + 4 H(+). Its function is as follows. Specifically dimethylates two adjacent adenosines (A1518 and A1519) in the loop of a conserved hairpin near the 3'-end of 16S rRNA in the 30S particle. May play a critical role in biogenesis of 30S subunits. This is Ribosomal RNA small subunit methyltransferase A from Shewanella frigidimarina (strain NCIMB 400).